A 486-amino-acid polypeptide reads, in one-letter code: Glutamyl-tRNA(Gln) amidotransferase subunit A (486 aa).

Catalysis depends on charge relay system residues K79 and S154. The active-site Acyl-ester intermediate is S178.

It belongs to the amidase family. GatA subfamily. In terms of assembly, heterotrimer of A, B and C subunits.

It catalyses the reaction L-glutamyl-tRNA(Gln) + L-glutamine + ATP + H2O = L-glutaminyl-tRNA(Gln) + L-glutamate + ADP + phosphate + H(+). Its function is as follows. Allows the formation of correctly charged Gln-tRNA(Gln) through the transamidation of misacylated Glu-tRNA(Gln) in organisms which lack glutaminyl-tRNA synthetase. The reaction takes place in the presence of glutamine and ATP through an activated gamma-phospho-Glu-tRNA(Gln). This Dehalococcoides mccartyi (strain ATCC BAA-2100 / JCM 16839 / KCTC 5957 / BAV1) protein is Glutamyl-tRNA(Gln) amidotransferase subunit A.